Consider the following 349-residue polypeptide: B3 domain-containing protein At5g24050 (349 aa).

Residues 240–341 (FNNLLRNDFL…ILCFAMEQSS (102 aa)) constitute a DNA-binding region (TF-B3).

The protein resides in the nucleus. The sequence is that of B3 domain-containing protein At5g24050 from Arabidopsis thaliana (Mouse-ear cress).